The chain runs to 468 residues: ATP synthase subunit beta 1 (468 aa).

155–162 contributes to the ATP binding site; sequence GGAGVGKT.

It belongs to the ATPase alpha/beta chains family. F-type ATPases have 2 components, CF(1) - the catalytic core - and CF(0) - the membrane proton channel. CF(1) has five subunits: alpha(3), beta(3), gamma(1), delta(1), epsilon(1). CF(0) has three main subunits: a(1), b(2) and c(9-12). The alpha and beta chains form an alternating ring which encloses part of the gamma chain. CF(1) is attached to CF(0) by a central stalk formed by the gamma and epsilon chains, while a peripheral stalk is formed by the delta and b chains.

The protein resides in the cell inner membrane. It carries out the reaction ATP + H2O + 4 H(+)(in) = ADP + phosphate + 5 H(+)(out). Functionally, produces ATP from ADP in the presence of a proton gradient across the membrane. The catalytic sites are hosted primarily by the beta subunits. This Syntrophotalea carbinolica (strain DSM 2380 / NBRC 103641 / GraBd1) (Pelobacter carbinolicus) protein is ATP synthase subunit beta 1.